A 136-amino-acid chain; its full sequence is MVKILKPGKVALVTRGRFAGKKVVILQNVDQGSKSHPFGHAVVAGVERYPLKVTKSMGAKRIAKRSRVKPFIKVINYNHLMPTRYALELDNLKGLVTPTTFSEPSQRSAAKKTVKNTFEEKYQTGKSAWFFTPLRF.

The protein belongs to the eukaryotic ribosomal protein eL27 family. In terms of assembly, component of the large ribosomal subunit (LSU). Mature yeast ribosomes consist of a small (40S) and a large (60S) subunit. The 40S small subunit contains 1 molecule of ribosomal RNA (18S rRNA) and at least 33 different proteins. The large 60S subunit contains 3 rRNA molecules (25S, 5.8S and 5S rRNA) and at least 46 different proteins.

It is found in the cytoplasm. Component of the ribosome, a large ribonucleoprotein complex responsible for the synthesis of proteins in the cell. The small ribosomal subunit (SSU) binds messenger RNAs (mRNAs) and translates the encoded message by selecting cognate aminoacyl-transfer RNA (tRNA) molecules. The large subunit (LSU) contains the ribosomal catalytic site termed the peptidyl transferase center (PTC), which catalyzes the formation of peptide bonds, thereby polymerizing the amino acids delivered by tRNAs into a polypeptide chain. The nascent polypeptides leave the ribosome through a tunnel in the LSU and interact with protein factors that function in enzymatic processing, targeting, and the membrane insertion of nascent chains at the exit of the ribosomal tunnel. The chain is Large ribosomal subunit protein eL27B (rpl2702) from Schizosaccharomyces pombe (strain 972 / ATCC 24843) (Fission yeast).